Reading from the N-terminus, the 93-residue chain is Large ribosomal subunit protein uL23cz/uL23cy (93 aa).

It belongs to the universal ribosomal protein uL23 family. Part of the 50S ribosomal subunit.

It localises to the plastid. Its subcellular location is the chloroplast. Binds to 23S rRNA. The polypeptide is Large ribosomal subunit protein uL23cz/uL23cy (rpl23-A) (Oryza nivara (Indian wild rice)).